Consider the following 220-residue polypeptide: SAGA-associated factor 11 homolog (220 aa).

The disordered stretch occupies residues 1–38 (MSTGTANSAVSSKSTNSTTSTSKVPVNEKSNNSQNANT). The SGF11-type zinc finger occupies 126 to 147 (CTCPNCDRPVSAARFAPHLEKC). 2 stretches are compositionally biased toward low complexity: residues 160–177 (RRLA…SSSS) and 204–220 (SQNS…GKTF). A disordered region spans residues 160–220 (RRLATKESNS…GSKKNNGKTF (61 aa)).

Belongs to the SGF11 family. In terms of assembly, component of some SAGA transcription coactivator-HAT complexes. Within the SAGA complex, participates in a subcomplex of SAGA called the DUB module (deubiquitination module).

It is found in the nucleus. Component of the transcription regulatory histone acetylation (HAT) complex SAGA, a multiprotein complex that activates transcription by remodeling chromatin and mediating histone acetylation and deubiquitination. Within the SAGA complex, participates in a subcomplex that specifically deubiquitinates histone H2B. The SAGA complex is recruited to specific gene promoters by activators, where it is required for transcription. The chain is SAGA-associated factor 11 homolog from Musca domestica (House fly).